The primary structure comprises 102 residues: Death-associated protein 1 (102 aa).

Residues 1 to 102 (MSSPPEGKLE…RTQHIQQPRK (102 aa)) are disordered. S2 is subject to N-acetylserine. S3 is subject to Phosphoserine; by MTOR. K29 bears the N6-acetyllysine mark. Residues 32–43 (HTGDTKEEKDKD) are compositionally biased toward basic and acidic residues. S49 carries the post-translational modification Phosphoserine. Phosphoserine; by MTOR is present on S51. S91 carries the post-translational modification Phosphoserine. A compositionally biased stretch (polar residues) spans 92–102 (PRTQHIQQPRK).

Belongs to the DAP-DAPL1 family. As to quaternary structure, associates with ribosomes; inhibiting translation. Interacts with eiF5a (EIF5A and EIF5A2); inhibiting translation. Phosphorylated. Phosphorylation by MTOR inhibits the suppressive activity of DAP toward autophagy.

In terms of biological role, ribosome-binding protein involved in ribosome hibernation, a process during which ribosomes are stabilized in an inactive state and preserved from proteasomal degradation. Acts via its association with eiF5a (EIF5A and EIF5A2) at the polypeptide exit tunnel of the ribosome, preventing mRNA translation. Involved in ribosome hibernation in the mature oocyte by preventing mRNA translation, leading to ribosome inactivation. Ribosomes, which are produced in large quantities during oogenesis, are stored and translationally repressed in the oocyte and early embryo. Also acts as a negative regulator of autophagy. Involved in mediating interferon-gamma-induced cell death. The chain is Death-associated protein 1 from Homo sapiens (Human).